A 95-amino-acid polypeptide reads, in one-letter code: Co-chaperonin GroES (95 aa).

It belongs to the GroES chaperonin family. As to quaternary structure, heptamer of 7 subunits arranged in a ring. Interacts with the chaperonin GroEL.

It is found in the cytoplasm. Its function is as follows. Together with the chaperonin GroEL, plays an essential role in assisting protein folding. The GroEL-GroES system forms a nano-cage that allows encapsulation of the non-native substrate proteins and provides a physical environment optimized to promote and accelerate protein folding. GroES binds to the apical surface of the GroEL ring, thereby capping the opening of the GroEL channel. The protein is Co-chaperonin GroES of Chlorobium phaeovibrioides (strain DSM 265 / 1930) (Prosthecochloris vibrioformis (strain DSM 265)).